The following is a 317-amino-acid chain: Glutathione synthetase (317 aa).

The region spanning 125 to 311 (EKMFATLFPQ…IGGKLMDAID (187 aa)) is the ATP-grasp domain. Residue 152–208 (TAKHADVILKPLDGMGGTSIFRHRAGDPNLSVILETLTALGTQQIMAQAYLPAIKDG) participates in ATP binding. Positions 282 and 284 each coordinate Mg(2+).

The protein belongs to the prokaryotic GSH synthase family. Requires Mg(2+) as cofactor. It depends on Mn(2+) as a cofactor.

The enzyme catalyses gamma-L-glutamyl-L-cysteine + glycine + ATP = glutathione + ADP + phosphate + H(+). It participates in sulfur metabolism; glutathione biosynthesis; glutathione from L-cysteine and L-glutamate: step 2/2. This Pseudomonas putida (strain ATCC 47054 / DSM 6125 / CFBP 8728 / NCIMB 11950 / KT2440) protein is Glutathione synthetase.